We begin with the raw amino-acid sequence, 36 residues long: Photosystem II reaction center protein M (36 aa).

The chain crosses the membrane as a helical span at residues 5–25; that stretch reads ILGVIATALFIIIPTSFLLIL.

This sequence belongs to the PsbM family. PSII is composed of 1 copy each of membrane proteins PsbA, PsbB, PsbC, PsbD, PsbE, PsbF, PsbH, PsbI, PsbJ, PsbK, PsbL, PsbM, PsbT, PsbX, PsbY, PsbZ, Psb30/Ycf12, at least 3 peripheral proteins of the oxygen-evolving complex and a large number of cofactors. It forms dimeric complexes.

The protein localises to the plastid. Its subcellular location is the chloroplast thylakoid membrane. One of the components of the core complex of photosystem II (PSII). PSII is a light-driven water:plastoquinone oxidoreductase that uses light energy to abstract electrons from H(2)O, generating O(2) and a proton gradient subsequently used for ATP formation. It consists of a core antenna complex that captures photons, and an electron transfer chain that converts photonic excitation into a charge separation. This subunit is found at the monomer-monomer interface. This chain is Photosystem II reaction center protein M, found in Chlorella vulgaris (Green alga).